Consider the following 277-residue polypeptide: Urease accessory protein UreD (277 aa).

Belongs to the UreD family. In terms of assembly, ureD, UreF and UreG form a complex that acts as a GTP-hydrolysis-dependent molecular chaperone, activating the urease apoprotein by helping to assemble the nickel containing metallocenter of UreC. The UreE protein probably delivers the nickel.

The protein resides in the cytoplasm. In terms of biological role, required for maturation of urease via the functional incorporation of the urease nickel metallocenter. The chain is Urease accessory protein UreD from Pseudomonas putida (strain W619).